Here is an 85-residue protein sequence, read N- to C-terminus: uncharacterized protein (85 aa).

This is an uncharacterized protein from Saccharomyces cerevisiae (strain ATCC 204508 / S288c) (Baker's yeast).